The following is a 93-amino-acid chain: MICAVYKSRLKPDSYLFVEKRNDFERVPEPLMKMFGTPELVMLLPLNKREQLALADIEKVKVELAEKGYYLQLPPPPVNLLEEYKKEIGYSRD.

One can recognise a YcgL domain in the interval 1–85 (MICAVYKSRL…PPVNLLEEYK (85 aa)).

This chain is YcgL domain-containing protein Shew_2183, found in Shewanella loihica (strain ATCC BAA-1088 / PV-4).